The chain runs to 326 residues: Target of rapamycin complex subunit lst8 (326 aa).

7 WD repeats span residues 1 to 37, 40 to 80, 83 to 122, 126 to 165, 168 to 207, 218 to 257, and 268 to 309; these read MNVN…CTRT, HQDS…PVIN, GVSK…LQCQ, QVNA…NEQL, EPDV…GDEV, AHKR…LMTE, and TSRG…REYS.

It belongs to the WD repeat LST8 family. Part of the mechanistic target of rapamycin complex 1 (mTORC1) which contains MTOR, MLST8 and RPTOR. Component of the mechanistic target of rapamycin complex 2 (mTORC2), consisting in two heterotretramers composed of MTOR, MLST8, RICTOR and MAPKAP1/SIN1.

Its subcellular location is the lysosome membrane. It localises to the cytoplasm. In terms of biological role, subunit of both mTORC1 and mTORC2, which regulates cell growth and survival in response to nutrient and hormonal signals. mTORC1 is activated in response to growth factors or amino acids. In response to nutrients, mTORC1 is recruited to the lysosome membrane and promotes protein, lipid and nucleotide synthesis by phosphorylating several substrates, such as ribosomal protein S6 kinase (RPS6KB1 and RPS6KB2) and EIF4EBP1 (4E-BP1). In the same time, it inhibits catabolic pathways by phosphorylating the autophagy initiation components ULK1 and ATG13, as well as transcription factor TFEB, a master regulators of lysosomal biogenesis and autophagy. The mTORC1 complex is inhibited in response to starvation and amino acid depletion. Within mTORC1, MLST8 interacts directly with MTOR and enhances its kinase activity. In nutrient-poor conditions, stabilizes the MTOR-RPTOR interaction and favors RPTOR-mediated inhibition of MTOR activity. As part of the mTORC2 complex, transduces signals from growth factors to pathways involved in proliferation, cytoskeletal organization, lipogenesis and anabolic output. mTORC2 is also activated by growth factors, but seems to be nutrient-insensitive. In response to growth factors, mTORC2 phosphorylates and activates AGC protein kinase family members, including AKT (AKT1, AKT2 and AKT3), PKC (PRKCA, PRKCB and PRKCE) and SGK1. mTORC2 functions upstream of Rho GTPases to regulate the actin cytoskeleton, probably by activating one or more Rho-type guanine nucleotide exchange factors. mTORC2 promotes the serum-induced formation of stress-fibers or F-actin. Within mTORC2, MLST8 acts as a bridge between MAPKAP1/SIN1 and MTOR. This Danio rerio (Zebrafish) protein is Target of rapamycin complex subunit lst8 (mlst8).